The chain runs to 529 residues: Na(+)/H(+) antiporter NhaB (529 aa).

Helical transmembrane passes span 13–33, 34–54, 90–110, 113–133, 149–166, 205–225, 241–261, 306–326, 327–347, 351–371, 451–471, and 479–499; these read FLGK…IINP, IVFF…EFIF, LVAN…IYFM, LLLF…ILSL, LTVI…YSIY, LLMH…VGEP, FLIR…LTCF, GLIA…VGLI, GLSV…HSLG, EEAL…AVII, ATPN…APLI, and VIMA…GIVF.

This sequence belongs to the NhaB Na(+)/H(+) (TC 2.A.34) antiporter family.

It localises to the cell inner membrane. It catalyses the reaction 2 Na(+)(in) + 3 H(+)(out) = 2 Na(+)(out) + 3 H(+)(in). Na(+)/H(+) antiporter that extrudes sodium in exchange for external protons. This Vibrio vulnificus (strain YJ016) protein is Na(+)/H(+) antiporter NhaB.